Consider the following 363-residue polypeptide: Phosphoserine aminotransferase (363 aa).

L-glutamate contacts are provided by Ser-9 and Arg-42. Pyridoxal 5'-phosphate is bound by residues 76-77 (AR), Trp-102, Thr-154, Asp-174, and Gln-197. An N6-(pyridoxal phosphate)lysine modification is found at Lys-198. Position 240-241 (240-241 (NT)) interacts with pyridoxal 5'-phosphate.

Belongs to the class-V pyridoxal-phosphate-dependent aminotransferase family. SerC subfamily. In terms of assembly, homodimer. Pyridoxal 5'-phosphate serves as cofactor.

The protein localises to the cytoplasm. It catalyses the reaction O-phospho-L-serine + 2-oxoglutarate = 3-phosphooxypyruvate + L-glutamate. It carries out the reaction 4-(phosphooxy)-L-threonine + 2-oxoglutarate = (R)-3-hydroxy-2-oxo-4-phosphooxybutanoate + L-glutamate. It participates in amino-acid biosynthesis; L-serine biosynthesis; L-serine from 3-phospho-D-glycerate: step 2/3. Its pathway is cofactor biosynthesis; pyridoxine 5'-phosphate biosynthesis; pyridoxine 5'-phosphate from D-erythrose 4-phosphate: step 3/5. Functionally, catalyzes the reversible conversion of 3-phosphohydroxypyruvate to phosphoserine and of 3-hydroxy-2-oxo-4-phosphonooxybutanoate to phosphohydroxythreonine. In Baumannia cicadellinicola subsp. Homalodisca coagulata, this protein is Phosphoserine aminotransferase.